A 567-amino-acid chain; its full sequence is Malate synthase, glyoxysomal (567 aa).

The Proton acceptor role is filled by R182. The Proton donor role is filled by D468. The Microbody targeting signal motif lies at 565–567 (SKL).

This sequence belongs to the malate synthase family.

It is found in the glyoxysome. The catalysed reaction is glyoxylate + acetyl-CoA + H2O = (S)-malate + CoA + H(+). It participates in carbohydrate metabolism; glyoxylate cycle; (S)-malate from isocitrate: step 2/2. The sequence is that of Malate synthase, glyoxysomal from Gossypium hirsutum (Upland cotton).